The primary structure comprises 462 residues: UDP-N-acetylmuramoylalanine--D-glutamate ligase (462 aa).

ATP is bound at residue 117 to 123 (GTNGKTT).

It belongs to the MurCDEF family.

It is found in the cytoplasm. It catalyses the reaction UDP-N-acetyl-alpha-D-muramoyl-L-alanine + D-glutamate + ATP = UDP-N-acetyl-alpha-D-muramoyl-L-alanyl-D-glutamate + ADP + phosphate + H(+). It functions in the pathway cell wall biogenesis; peptidoglycan biosynthesis. Functionally, cell wall formation. Catalyzes the addition of glutamate to the nucleotide precursor UDP-N-acetylmuramoyl-L-alanine (UMA). This chain is UDP-N-acetylmuramoylalanine--D-glutamate ligase, found in Parasynechococcus marenigrum (strain WH8102).